The chain runs to 99 residues: MSTILVLGGSNGRTLEKLAKKRDCQVIFHDGKNHGGVKKTFRSVIKKCDVIVIQKGACGHVSIDVAKEYAKKYDVPLLFNQGFGGTGALEMGLKHLKAA.

Belongs to the UPF0751 family.

In Bacillus anthracis (strain CDC 684 / NRRL 3495), this protein is UPF0751 protein BAMEG_A0107.